Consider the following 405-residue polypeptide: Argininosuccinate synthase (405 aa).

Alanine 11–serine 19 serves as a coordination point for ATP. Position 90 (tyrosine 90) interacts with L-citrulline. Glycine 119 contributes to the ATP binding site. 3 residues coordinate L-aspartate: threonine 121, asparagine 125, and aspartate 126. Asparagine 125 lines the L-citrulline pocket. L-citrulline is bound by residues arginine 129, serine 178, serine 187, glutamate 263, and tyrosine 275.

It belongs to the argininosuccinate synthase family. Type 1 subfamily. As to quaternary structure, homotetramer.

The protein resides in the cytoplasm. The enzyme catalyses L-citrulline + L-aspartate + ATP = 2-(N(omega)-L-arginino)succinate + AMP + diphosphate + H(+). Its pathway is amino-acid biosynthesis; L-arginine biosynthesis; L-arginine from L-ornithine and carbamoyl phosphate: step 2/3. The polypeptide is Argininosuccinate synthase (Legionella pneumophila (strain Corby)).